A 918-amino-acid chain; its full sequence is von Willebrand factor A domain-containing protein DDB_G0292016 (918 aa).

The VIT domain occupies 44–172; it reads KRCGLYSLKN…NVKVRVVISS (129 aa). Residues 299 to 467 enclose the VWFA domain; it reads EFIFLIDCSG…NMEKQVMKLL (169 aa). The segment at 625–814 is disordered; it reads VDIMNQSPPI…PSAPSQQKSV (190 aa). Low complexity predominate over residues 650–690; sequence ASGALSSSILSRKRSSSPSTATKRSSSSSFSSSYLSLSSSS. A compositionally biased stretch (acidic residues) spans 716–746; sequence YESDGGDQSSEQDEEEEDDCDDFHEDLDEDL. Over residues 752 to 774 the composition is skewed to basic and acidic residues; the sequence is DVDKKECEKECKKKDSSKVDLKV. The segment covering 777-814 has biased composition (low complexity); that stretch reads SKVPLPSRSPSVSKPTTTSLLSPSPKSAPSAPSQQKSV.

The sequence is that of von Willebrand factor A domain-containing protein DDB_G0292016 from Dictyostelium discoideum (Social amoeba).